Consider the following 1053-residue polypeptide: MAAAYLDPNLNHTPSSSAKTHLGTGMERSPGAMERVLKVFHYFENSSEPTTWASIIRHGDATDVRGIIQKIVDCHKVKNVACYGLRLSHLQSEEVHWLHLDMGVSNVREKFELAHPPEEWKYELRIRYLPKGFLNQFTEDKPTLNFFYQQVKNDYMLEIADQVDQEIALKLGCLEIRRSYGEMRGNALEKKSNYEVLEKDVGLRRFFPKSLLDSVKAKTLRKLIQQTFRQFANLNREESILKFFEILSPVYRFDKECFKCALGSSWIISVELAIGPEEGISYLTDKGANPTHLADFNQVQTIQYSNSEDKDRKGMLQLKIAGAPEPLTVTAPSLTIAENMADLIDGYCRLVNGATQSFIIRPQKEGERALPSIPKLANNEKQGVRSHTVSVSETDDYAEIIDEEDTYTMPSTRDYEIQRERIELGRCIGEGQFGDVHQGIYMSPENPAMAVAIKTCKNCTSDSVREKFLQEALTMRQFDHPHIVKLIGVITENPVWIIMELCTLGELRSFLQVRKFSLDLASLILYAYQLSTALAYLESKRFVHRDIAARNVLVSATDCVKLGDFGLSRYMEDSTYYKASKGKLPIKWMAPESINFRRFTSASDVWMFGVCMWEILMHGVKPFQGVKNNDVIGRIENGERLPMPPNCPPTLYSLMTKCWAYDPSRRPRFTELKAQLSTILEEEKLQQEERMRMESRRQVTVSWDSGGSDEAPPKPSRPGYPSPRSSEGFYPSPQHMVQPNHYQVSGYSGSHGIPAMAGSIYPGQASLLDQTDSWNHRPQEVSAWQPNMEDSGTLDVRGMGQVLPTHLMEERLIRQQQEMEEDQRWLEKEERFLVMKPDVRLSRGSIEREDGGLQGPAGNQHIYQPVGKPDHAAPPKKPPRPGAPHLGSLASLNSPVDSYNEGVKIKPQEISPPPTANLDRSNDKVYENVTGLVKAVIEMSSKIQPAPPEEYVPMVKEVGLALRTLLATVDESLPVLPASTHREIEMAQKLLNSDLAELINKMKLAQQYVMTSLQQEYKKQMLTAAHALAVDAKNLLDVIDQARLKMISQSRPH.

Residues 1–27 (MAAAYLDPNLNHTPSSSAKTHLGTGME) are disordered. Over residues 10–19 (LNHTPSSSAK) the composition is skewed to polar residues. The FERM domain occupies 35–355 (RVLKVFHYFE…GYCRLVNGAT (321 aa)). Tyrosine 397 bears the Phosphotyrosine; by autocatalysis mark. Position 407 is a phosphotyrosine (tyrosine 407). One can recognise a Protein kinase domain in the interval 422–680 (IELGRCIGEG…ELKAQLSTIL (259 aa)). ATP is bound by residues 428–434 (IGEGQFG), lysine 454, and 500–502 (ELC). Aspartate 546 functions as the Proton acceptor in the catalytic mechanism. Residues tyrosine 576 and tyrosine 577 each carry the phosphotyrosine; by SRC modification. Residues 686–697 (QQEERMRMESRR) show a composition bias toward basic and acidic residues. 2 disordered regions span residues 686-741 (QQEE…QPNH) and 843-892 (RGSI…LASL). Position 863 is a phosphotyrosine (tyrosine 863). At serine 911 the chain carries Phosphoserine. At tyrosine 926 the chain carries Phosphotyrosine.

The protein belongs to the protein kinase superfamily. Tyr protein kinase family. FAK subfamily. Interacts with ARHGAP26, GRB7, DCC, PIK3R1, PXN and SRC. Interacts with the ARP2/3 complex. Phosphorylated on tyrosine residues upon activation, e.g. upon integrin signaling. Tyr-397 is the major autophosphorylation site, but other kinases can also phosphorylate this residue. Phosphorylation at Tyr-397 promotes interaction with SRC and SRC family members, leading to phosphorylation at Tyr-576, Tyr-577 and at additional tyrosine residues. Isoform 2 is phosphorylated on serine or threonine residues, but apparently not on tyrosine residues.

The protein resides in the cell junction. It is found in the focal adhesion. The protein localises to the cell membrane. Its subcellular location is the cytoplasm. It localises to the perinuclear region. The protein resides in the cell cortex. It is found in the cytoskeleton. The protein localises to the microtubule organizing center. Its subcellular location is the centrosome. It localises to the nucleus. The protein resides in the cilium basal body. It catalyses the reaction L-tyrosyl-[protein] + ATP = O-phospho-L-tyrosyl-[protein] + ADP + H(+). With respect to regulation, subject to autoinhibition, mediated by interactions between the FERM domain and the kinase domain. Activated by autophosphorylation at Tyr-397. This promotes interaction with SRC and phosphorylation at Tyr-576 and Tyr-577 in the kinase activation loop. Phosphorylation at Tyr-576 and Tyr-577 is required for maximal kinase activity. Inhibited by TAE226. Non-receptor protein-tyrosine kinase that plays an essential role in regulating cell migration, adhesion, spreading, reorganization of the actin cytoskeleton, formation and disassembly of focal adhesions and cell protrusions, cell cycle progression, cell proliferation and apoptosis. Required for early embryonic development, embryonic angiogenesis, normal cardiomyocyte migration and proliferation, and normal heart development. Regulates axon growth and neuronal cell migration, axon branching and synapse formation; required for normal development of the nervous system. Plays a role in osteogenesis and differentiation of osteoblasts. Functions in integrin signal transduction, but also in signaling downstream of numerous growth factor receptors, G-protein coupled receptors (GPCR), ephrin receptors, netrin receptors and LDL receptors. Forms multisubunit signaling complexes with SRC and SRC family members upon activation; this leads to the phosphorylation of additional tyrosine residues, creating binding sites for scaffold proteins, effectors and substrates. Regulates numerous signaling pathways. Promotes activation of phosphatidylinositol 3-kinase and the AKT1 signaling cascade. Promotes activation of MAPK1/ERK2, MAPK3/ERK1 and the MAP kinase signaling cascade. Promotes localized and transient activation of guanine nucleotide exchange factors (GEFs) and GTPase-activating proteins (GAPs), and thereby modulates the activity of Rho family GTPases. Signaling via CAS family members mediates activation of RAC1. Regulates P53/TP53 activity and stability. Phosphorylates SRC; this increases SRC kinase activity. Isoform 2 (FRNK) does not contain a kinase domain and inhibits PTK2/FAK1 phosphorylation and signaling. In Gallus gallus (Chicken), this protein is Focal adhesion kinase 1 (PTK2).